A 405-amino-acid chain; its full sequence is Protein PAG1 (405 aa).

An N-terminal signal peptide occupies residues 1–50; that stretch reads MVSLIILFRLTFAIANRVRTLMKVLVIVSFFVLTGSASADSGALSLSGAA. N-linked (GlcNAc...) asparagine glycans are attached at residues asparagine 55, asparagine 104, asparagine 256, and asparagine 351. Alanine 391 is lipidated: GPI-anchor amidated alanine. A propeptide spans 392 to 405 (removed in mature form); the sequence is DSLRRTLALLFLLF.

It localises to the cell membrane. This is Protein PAG1 (PAG1) from Trypanosoma brucei brucei.